We begin with the raw amino-acid sequence, 269 residues long: Hydroxymethylpyrimidine/phosphomethylpyrimidine kinase (269 aa).

4-amino-5-hydroxymethyl-2-methylpyrimidine is bound at residue Gln45.

Belongs to the ThiD family.

The catalysed reaction is 4-amino-5-hydroxymethyl-2-methylpyrimidine + ATP = 4-amino-2-methyl-5-(phosphooxymethyl)pyrimidine + ADP + H(+). It carries out the reaction 4-amino-2-methyl-5-(phosphooxymethyl)pyrimidine + ATP = 4-amino-2-methyl-5-(diphosphooxymethyl)pyrimidine + ADP. It participates in cofactor biosynthesis; thiamine diphosphate biosynthesis; 4-amino-2-methyl-5-diphosphomethylpyrimidine from 5-amino-1-(5-phospho-D-ribosyl)imidazole: step 2/3. The protein operates within cofactor biosynthesis; thiamine diphosphate biosynthesis; 4-amino-2-methyl-5-diphosphomethylpyrimidine from 5-amino-1-(5-phospho-D-ribosyl)imidazole: step 3/3. Its function is as follows. Catalyzes the phosphorylation of hydroxymethylpyrimidine phosphate (HMP-P) to HMP-PP, and of HMP to HMP-P. This chain is Hydroxymethylpyrimidine/phosphomethylpyrimidine kinase (thiD), found in Helicobacter pylori (strain J99 / ATCC 700824) (Campylobacter pylori J99).